Consider the following 591-residue polypeptide: Isocitrate dehydrogenase kinase/phosphatase (591 aa).

ATP-binding positions include 315–321 and Lys-336; that span reads APGVKGM. The active site involves Asp-371.

This sequence belongs to the AceK family.

The protein localises to the cytoplasm. It carries out the reaction L-seryl-[isocitrate dehydrogenase] + ATP = O-phospho-L-seryl-[isocitrate dehydrogenase] + ADP + H(+). Functionally, bifunctional enzyme which can phosphorylate or dephosphorylate isocitrate dehydrogenase (IDH) on a specific serine residue. This is a regulatory mechanism which enables bacteria to bypass the Krebs cycle via the glyoxylate shunt in response to the source of carbon. When bacteria are grown on glucose, IDH is fully active and unphosphorylated, but when grown on acetate or ethanol, the activity of IDH declines drastically concomitant with its phosphorylation. This Pectobacterium carotovorum subsp. carotovorum (strain PC1) protein is Isocitrate dehydrogenase kinase/phosphatase.